The primary structure comprises 172 residues: Shikimate kinase (172 aa).

An ATP-binding site is contributed by 14–19 (GAGKST). Ser18 lines the Mg(2+) pocket. Substrate is bound by residues Asp36, Arg60, and Gly82. ATP is bound at residue Arg120. Arg139 is a substrate binding site. Gln156 serves as a coordination point for ATP.

It belongs to the shikimate kinase family. In terms of assembly, monomer. Mg(2+) is required as a cofactor.

It is found in the cytoplasm. The catalysed reaction is shikimate + ATP = 3-phosphoshikimate + ADP + H(+). It participates in metabolic intermediate biosynthesis; chorismate biosynthesis; chorismate from D-erythrose 4-phosphate and phosphoenolpyruvate: step 5/7. Its function is as follows. Catalyzes the specific phosphorylation of the 3-hydroxyl group of shikimic acid using ATP as a cosubstrate. The polypeptide is Shikimate kinase (Vibrio parahaemolyticus serotype O3:K6 (strain RIMD 2210633)).